The primary structure comprises 100 residues: Urease subunit gamma (100 aa).

It belongs to the urease gamma subunit family. In terms of assembly, heterotrimer of UreA (gamma), UreB (beta) and UreC (alpha) subunits. Three heterotrimers associate to form the active enzyme.

It localises to the cytoplasm. It carries out the reaction urea + 2 H2O + H(+) = hydrogencarbonate + 2 NH4(+). Its pathway is nitrogen metabolism; urea degradation; CO(2) and NH(3) from urea (urease route): step 1/1. The sequence is that of Urease subunit gamma from Rhodococcus opacus (strain B4).